The following is a 2035-amino-acid chain: Envoplakin (2035 aa).

Positions 1–27 are enriched in low complexity; it reads MFKGLSKGSQGKGSPKGSPAKGSPKGS. 2 disordered regions span residues 1–37 and 63–84; these read MFKG…AATQ and KLQQ…QETG. The segment at 1-841 is globular 1; that stretch reads MFKGLSKGSQ…LEPALAVSAP (841 aa). The interval 12 to 28 is 4 X 4 AA tandem repeats of K-G-S-P; it reads KGSPKGSPAKGSPKGSP. Over residues 71-84 the composition is skewed to polar residues; sequence GEQNQALQHQQETG. A Spectrin repeat occupies 229–330; sequence YTHLQGCTKQ…LCICQESQLQ (102 aa). Residues 400 to 419 are disordered; the sequence is QEVAPLPQRRNPSKQPLHVD. An SH3 domain is found at 413–470; that stretch reads KQPLHVDSICDWDSGEVQLLRGERYTLKDNADPYTWLVQGPGGETKSAPAACLCIPAP. A coiled-coil region spans residues 842 to 1664; it reads KRLRVISLQE…EKERTLRDLH (823 aa). The interval 842-1674 is central fibrous rod domain; the sequence is KRLRVISLQE…TKVSREELNQ (833 aa). A Plectin 1 repeat occupies 1186–1227; the sequence is KQKPKVQLQERVSEIFQVLPETEQEIRRLRAQLQETGSKKSG. Serine 1576 is subject to Phosphoserine. Basic and acidic residues predominate over residues 1607-1631; sequence KQQKARQLQEEGRLLSQKTESERQK. The disordered stretch occupies residues 1607–1637; sequence KQQKARQLQEEGRLLSQKTESERQKAAQRSQ. Residues 1675–2035 are globular 2; sequence ETQTRETNLS…SPTLPRSCVR (361 aa). One copy of the Plectin 2 repeat lies at 1679–1714; it reads RETNLSTKICILEPETGNDMSPYEAYKRGVIDRGQY. The residue at position 1800 (serine 1800) is a Phosphoserine. Plectin repeat units follow at residues 1819–1856, 1857–1894, 1895–1932, 1933–1970, and 1971–2008; these read FGLT…PITG, QKLL…NTST, QRLL…QESV, LPHL…EDLG, and QLLQ…PLSG. A Phosphoserine modification is found at serine 2026.

This sequence belongs to the plakin or cytolinker family. As to quaternary structure, may form a homodimer or a heterodimer with PPL.

It localises to the cell junction. The protein resides in the desmosome. Its subcellular location is the cornified envelope. It is found in the cytoplasm. The protein localises to the cytoskeleton. Component of the cornified envelope of keratinocytes. May link the cornified envelope to desmosomes and intermediate filaments. This Mus musculus (Mouse) protein is Envoplakin (Evpl).